Here is a 417-residue protein sequence, read N- to C-terminus: Serine hydroxymethyltransferase (417 aa).

(6S)-5,6,7,8-tetrahydrofolate is bound by residues Leu121 and 125-127 (GHL). Lys229 bears the N6-(pyridoxal phosphate)lysine mark. 355–357 (SPF) lines the (6S)-5,6,7,8-tetrahydrofolate pocket.

This sequence belongs to the SHMT family. Homodimer. The cofactor is pyridoxal 5'-phosphate.

It is found in the cytoplasm. It carries out the reaction (6R)-5,10-methylene-5,6,7,8-tetrahydrofolate + glycine + H2O = (6S)-5,6,7,8-tetrahydrofolate + L-serine. It participates in one-carbon metabolism; tetrahydrofolate interconversion. Its pathway is amino-acid biosynthesis; glycine biosynthesis; glycine from L-serine: step 1/1. Catalyzes the reversible interconversion of serine and glycine with tetrahydrofolate (THF) serving as the one-carbon carrier. This reaction serves as the major source of one-carbon groups required for the biosynthesis of purines, thymidylate, methionine, and other important biomolecules. Also exhibits THF-independent aldolase activity toward beta-hydroxyamino acids, producing glycine and aldehydes, via a retro-aldol mechanism. The chain is Serine hydroxymethyltransferase from Salmonella paratyphi C (strain RKS4594).